A 300-amino-acid polypeptide reads, in one-letter code: Glycine--tRNA ligase alpha subunit (300 aa).

Belongs to the class-II aminoacyl-tRNA synthetase family. In terms of assembly, tetramer of two alpha and two beta subunits.

It localises to the cytoplasm. The catalysed reaction is tRNA(Gly) + glycine + ATP = glycyl-tRNA(Gly) + AMP + diphosphate. The protein is Glycine--tRNA ligase alpha subunit of Prochlorococcus marinus (strain MIT 9313).